A 713-amino-acid polypeptide reads, in one-letter code: Phosphoribosylformylglycinamidine synthase subunit PurL (713 aa).

His32 is an active-site residue. Tyr35 is an ATP binding site. Glu76 serves as a coordination point for Mg(2+). Residues 77–80 (SHNH) and Arg99 each bind substrate. His78 (proton acceptor) is an active-site residue. Asp100 is a Mg(2+) binding site. Gln224 provides a ligand contact to substrate. Asp252 provides a ligand contact to Mg(2+). Residue 296 to 298 (ESQ) participates in substrate binding. Residues Asp471 and Gly508 each coordinate ATP. Residue Asn509 participates in Mg(2+) binding. Ser511 is a binding site for substrate.

The protein belongs to the FGAMS family. As to quaternary structure, monomer. Part of the FGAM synthase complex composed of 1 PurL, 1 PurQ and 2 PurS subunits.

It is found in the cytoplasm. The enzyme catalyses N(2)-formyl-N(1)-(5-phospho-beta-D-ribosyl)glycinamide + L-glutamine + ATP + H2O = 2-formamido-N(1)-(5-O-phospho-beta-D-ribosyl)acetamidine + L-glutamate + ADP + phosphate + H(+). Its pathway is purine metabolism; IMP biosynthesis via de novo pathway; 5-amino-1-(5-phospho-D-ribosyl)imidazole from N(2)-formyl-N(1)-(5-phospho-D-ribosyl)glycinamide: step 1/2. Functionally, part of the phosphoribosylformylglycinamidine synthase complex involved in the purines biosynthetic pathway. Catalyzes the ATP-dependent conversion of formylglycinamide ribonucleotide (FGAR) and glutamine to yield formylglycinamidine ribonucleotide (FGAM) and glutamate. The FGAM synthase complex is composed of three subunits. PurQ produces an ammonia molecule by converting glutamine to glutamate. PurL transfers the ammonia molecule to FGAR to form FGAM in an ATP-dependent manner. PurS interacts with PurQ and PurL and is thought to assist in the transfer of the ammonia molecule from PurQ to PurL. The protein is Phosphoribosylformylglycinamidine synthase subunit PurL of Thermococcus kodakarensis (strain ATCC BAA-918 / JCM 12380 / KOD1) (Pyrococcus kodakaraensis (strain KOD1)).